Consider the following 342-residue polypeptide: Serpentine receptor class gamma-69 (342 aa).

7 helical membrane passes run 11–31 (MAGLIGIYAFQGFYGLLSVVV), 51–71 (SLLYTCCAALSLTYFLDHFLI), 106–126 (PIAILVFHALIAAHRFSIVAA), 140–160 (LFVLVGFLIPLIFMWFMIPCK), 191–211 (IAAVLFGVLTLCLTFGMLIAL), 222–242 (AEISLIVFEVFMTVFTLIYAF), and 269–289 (FAIDIFILPQAWTLLFLSTTV).

This sequence belongs to the nematode receptor-like protein srg family.

It localises to the membrane. The chain is Serpentine receptor class gamma-69 (srg-69) from Caenorhabditis elegans.